Reading from the N-terminus, the 586-residue chain is Retron Ec67 protein (586 aa).

In terms of domain architecture, Reverse transcriptase spans 29–262 (FLTNVLYRIG…SRQEVTGLTV (234 aa)). Residues aspartate 120, aspartate 201, and aspartate 202 each contribute to the Mg(2+) site.

This sequence belongs to the bacterial reverse transcriptase family.

It catalyses the reaction DNA(n) + a 2'-deoxyribonucleoside 5'-triphosphate = DNA(n+1) + diphosphate. The catalysed reaction is Endonucleolytic cleavage to 5'-phosphomonoester.. Reverse transcriptase (RT) component of antiviral defense system retron Ec67, minimally composed of a non-coding RNA (ncRNA) and this RT. Expression of these 2 elements confers protection against bacteriophage T5. At multiplicity of infection (MOI) of 0.02 cultures grow normally when infected with T5 without collapsing, at MOI 2 cultures enter growth stasis. Responsible for synthesis of msDNA-Ec67 (a branched molecule with RNA linked by a 2',5'-phosphodiester bond to ssDNA). The retron transcript serves as primer (from a conserved internal G residue) and template for the reaction, and codes for the RT. Can use other retrons as substrate (msDNA-Mx162 and msDNA-Ec86). Also able to synthesize DNA from a DNA template at least in vitro, although the enzyme is less active with a DNA template. This chain is Retron Ec67 protein, found in Escherichia coli.